The sequence spans 243 residues: tRNA (guanine-N(1)-)-methyltransferase (243 aa).

S-adenosyl-L-methionine is bound by residues Gly113 and 133-138; that span reads IGDFVL.

It belongs to the RNA methyltransferase TrmD family. As to quaternary structure, homodimer.

The protein localises to the cytoplasm. The catalysed reaction is guanosine(37) in tRNA + S-adenosyl-L-methionine = N(1)-methylguanosine(37) in tRNA + S-adenosyl-L-homocysteine + H(+). Functionally, specifically methylates guanosine-37 in various tRNAs. The sequence is that of tRNA (guanine-N(1)-)-methyltransferase from Bacillus licheniformis (strain ATCC 14580 / DSM 13 / JCM 2505 / CCUG 7422 / NBRC 12200 / NCIMB 9375 / NCTC 10341 / NRRL NRS-1264 / Gibson 46).